We begin with the raw amino-acid sequence, 338 residues long: 3 beta-hydroxysteroid dehydrogenase type 7 (338 aa).

Y159 (proton acceptor) is an active-site residue. K163 contacts NAD(+). 2 helical membrane-spanning segments follow: residues 258 to 278 and 280 to 300; these read LLPY…QWLL and PLVL…NTTF.

Belongs to the 3-beta-HSD family. As to expression, high levels in liver and lung, moderate levels in spleen, brain, heart, kidney, jejunum and testis. Up-regulated in 3Y1 cells upon growth arrest.

The protein localises to the endoplasmic reticulum membrane. The enzyme catalyses 7alpha-hydroxycholesterol + NAD(+) = 7alpha-hydroxycholest-4-en-3-one + NADH + H(+). It carries out the reaction 7alpha,25-dihydroxycholesterol + NAD(+) = 7alpha,25-dihydroxy-4-cholesten-3-one + NADH + H(+). It catalyses the reaction (25R)-cholest-5-en-3beta,7alpha,26-triol + NAD(+) = (25R)-7alpha,26-dihydroxycholest-4-en-3-one + NADH + H(+). The catalysed reaction is (24S)-7alpha-dihydroxycholesterol + NAD(+) = (24S)-7alpha,24-dihydroxycholest-4-en-3-one + NADH + H(+). It participates in lipid metabolism; steroid biosynthesis. Functionally, the 3-beta-HSD enzymatic system plays a crucial role in the biosynthesis of all classes of hormonal steroids. HSD VII is active against four 7-alpha-hydroxylated sterols. Does not metabolize several different C(19/21) steroids as substrates. Involved in bile acid synthesis. Plays a key role in cell positioning and movement in lymphoid tissues by mediating degradation of 7-alpha,25-dihydroxycholesterol (7-alpha,25-OHC): 7-alpha,25-OHC acts as a ligand for the G protein-coupled receptor GPR183/EBI2, a chemotactic receptor for a number of lymphoid cells. The chain is 3 beta-hydroxysteroid dehydrogenase type 7 from Rattus norvegicus (Rat).